Here is a 1137-residue protein sequence, read N- to C-terminus: MLAHTHRINKCLYGQNQMRNRHALLGALPPIFLLLLPLISCMKFDPERIAARLRIDEKWDQLDAFQSIKSRRGRQIQPKEISIQVTAPLFSSRLFDYGTTAGDEELPQALDVGKKLDLVHPISFFGSDYKTIYILSNGAVGFEASSRSYKSGILPSSTRFLAPFWNRNDLRNGGKVYYREVTKGRVLERGQSEIRYQYDKNVKVKSALIITWDKMQPLNTAALPEENTNTFQAAIFITANGTFANFIYSNIGWTQGAEAGFNAGDATNHFKLPTSGTPNIMYLEEYGNTGIPGEWMFELSELRVISCKSGIKGDTCDQECSNGEWGPDCAYCCHCSEGTCHPISGDCQRGCATCWDGVACQTRQEKCATKTQCASNALSFNDYDRCGEPIQRCQCLNGYKGDGYNNCEDVDECKTNSTICHKNAICTNTPGRYFCMCKEGFSGDGQNDCSQSFLFQYDTHHQLPRKKNSKMEWNLKKPLKIFGETTEKLTVTSTGLIAINEVNRDNGRLEDMQLVGIAPFFGPIDLSRNGAVSVEEVDDVEVLRRVTRTIGENYNDPTFVAKSALVVTFSNVTDGRQTKGNTFQALLIDGSNSKNEKMTFVELMYRDLPWASGAEAGILSSDASSSILLPASGTEAISQLSKNSNIKQPGTWLYRIDKAQLMPCAQPIQVPPYCDRLLSTAPRLPSKLLEEKKEGLTLPSPGAFLVDQPSETIVPTLVRGGGTVTRGRNVLTVTTSPIGNQQRQQTTKAVTRPRPNFSSTPHRPIVSLSDEDFELGPDAFEVTFPPFVTVQPELFRPNQRNGVQKSTQRPLPDFSIRTPLKEEATTSVPREKTSSAAPAHSPIEEMSENEESPFEAGSFDGEAVKFNEELEAIDKALQTTKKQRPELSVTPQPEDLSGDARVIETTEEDEEEAEISTETTTEMSSTTTTTKAHTTTTTMMIPTEAPPSIFVFTTTQKPRAQSTTQKRIIVQQPSIVVNSQPPKQRNDNQPTVNVGHAEEQSPRLAILLPVMIILAWLVILVCIGAVVCCKRRNSRESSQLRAMYGAAYGVRPTAYESKRKESTYEDHLERAARLSGQPALSGQQAGKVSLYGSYWNLEPLSNHSPARLSTQERQSPPSFVNNGYTNQTTRYTYAGHY.

A signal peptide spans 1-41 (MLAHTHRINKCLYGQNQMRNRHALLGALPPIFLLLLPLISC). Residues 43-1005 (KFDPERIAAR…HAEEQSPRLA (963 aa)) lie on the Extracellular side of the membrane. The NIDO 1 domain occupies 163 to 302 (PFWNRNDLRN…GEWMFELSEL (140 aa)). N-linked (GlcNAc...) asparagine glycans are attached at residues Asn240 and Asn416. An EGF-like; calcium-binding domain is found at 409 to 450 (DVDECKTNSTICHKNAICTNTPGRYFCMCKEGFSGDGQNDCS). Cystine bridges form between Cys413–Cys426, Cys420–Cys435, and Cys437–Cys449. The NIDO 2 domain maps to 519–659 (PFFGPIDLSR…GTWLYRIDKA (141 aa)). Asn571 is a glycosylation site (N-linked (GlcNAc...) asparagine). The segment covering 738 to 749 (IGNQQRQQTTKA) has biased composition (polar residues). 5 disordered regions span residues 738-765 (IGNQ…HRPI), 795-856 (FRPN…PFEA), 878-897 (QTTK…EDLS), 906-933 (TEED…TKAH), and 978-998 (NSQP…GHAE). An N-linked (GlcNAc...) asparagine glycan is attached at Asn756. A compositionally biased stretch (polar residues) spans 798–809 (NQRNGVQKSTQR). Residues 819 to 833 (PLKEEATTSVPREKT) show a composition bias toward basic and acidic residues. Acidic residues predominate over residues 906–915 (TEEDEEEAEI). Positions 916–933 (STETTTEMSSTTTTTKAH) are enriched in low complexity. A compositionally biased stretch (polar residues) spans 978–992 (NSQPPKQRNDNQPTV). The chain crosses the membrane as a helical span at residues 1006–1026 (ILLPVMIILAWLVILVCIGAV). Topologically, residues 1027–1037 (VCCKRRNSRES) are cytoplasmic. The segment at 1106-1125 (ARLSTQERQSPPSFVNNGYT) is disordered.

Post-translationally, may be proteolytically cleaved and secreted.

The protein resides in the membrane. The protein localises to the cell projection. Its subcellular location is the dendrite. It is found in the secreted. In terms of biological role, along with dyf-7, enables neurite growth and maintenance by anchoring amphid dendritic tips during neuron cell body migration in embryonic and larval development. Promotes seam cell remodeling during the dauer phase. Plays a role in positively regulating locomotion during the dauer phase. The chain is Dendrite extension defective protein 1 from Caenorhabditis elegans.